The chain runs to 38 residues: uncharacterized protein (38 aa).

This is an uncharacterized protein from Haemophilus influenzae (strain ATCC 51907 / DSM 11121 / KW20 / Rd).